Here is a 736-residue protein sequence, read N- to C-terminus: Catalase-peroxidase (736 aa).

Residues 1–30 are disordered; it reads MGGNVMTDDKMNSVTSGANKQETGRDMSNR. Residues 12-21 are compositionally biased toward polar residues; that stretch reads NSVTSGANKQ. Positions 101–224 form a cross-link, tryptophyl-tyrosyl-methioninium (Trp-Tyr) (with M-250); sequence WHSAGTYRAG…LAAVQMGLIY (124 aa). H102 functions as the Proton acceptor in the catalytic mechanism. Positions 224–250 form a cross-link, tryptophyl-tyrosyl-methioninium (Tyr-Met) (with W-101); the sequence is YVNPEGPNGNPDPIAAAKDIREVFARM. H265 serves as a coordination point for heme b. Residues 351–373 form a disordered region; that stretch reads KGGAGAGTIPDAHDPSKRHAPSM.

This sequence belongs to the peroxidase family. Peroxidase/catalase subfamily. In terms of assembly, homodimer or homotetramer. Requires heme b as cofactor. In terms of processing, formation of the three residue Trp-Tyr-Met cross-link is important for the catalase, but not the peroxidase activity of the enzyme.

It carries out the reaction H2O2 + AH2 = A + 2 H2O. The enzyme catalyses 2 H2O2 = O2 + 2 H2O. In terms of biological role, bifunctional enzyme with both catalase and broad-spectrum peroxidase activity. In Methanosarcina acetivorans (strain ATCC 35395 / DSM 2834 / JCM 12185 / C2A), this protein is Catalase-peroxidase.